Reading from the N-terminus, the 332-residue chain is Transaldolase (332 aa).

The Schiff-base intermediate with substrate role is filled by Lys135.

The protein belongs to the transaldolase family. Type 1 subfamily. In terms of assembly, homodimer.

Its subcellular location is the cytoplasm. It catalyses the reaction D-sedoheptulose 7-phosphate + D-glyceraldehyde 3-phosphate = D-erythrose 4-phosphate + beta-D-fructose 6-phosphate. It functions in the pathway carbohydrate degradation; pentose phosphate pathway; D-glyceraldehyde 3-phosphate and beta-D-fructose 6-phosphate from D-ribose 5-phosphate and D-xylulose 5-phosphate (non-oxidative stage): step 2/3. Functionally, transaldolase is important for the balance of metabolites in the pentose-phosphate pathway. This is Transaldolase from Prochlorococcus marinus (strain NATL1A).